The chain runs to 120 residues: Large ribosomal subunit protein bL17 (120 aa).

It belongs to the bacterial ribosomal protein bL17 family. As to quaternary structure, part of the 50S ribosomal subunit. Contacts protein L32.

In Anoxybacillus flavithermus (strain DSM 21510 / WK1), this protein is Large ribosomal subunit protein bL17.